A 467-amino-acid polypeptide reads, in one-letter code: Translation initiation factor eIF2B subunit delta (467 aa).

Residues 1–106 form a disordered region; the sequence is MGFSAEQAKK…QNPQNSPETD (106 aa). A phosphoserine mark is found at Ser-16, Ser-19, Ser-21, and Ser-23. Residues 16 to 37 are compositionally biased toward polar residues; the sequence is SPVSESSSVGGTSPATASSVVS. Thr-27 is subject to Phosphothreonine. 2 positions are modified to phosphoserine: Ser-28 and Ser-37. Basic residues predominate over residues 51 to 61; it reads LKKARKQASRR. Residues 84 to 102 are compositionally biased toward low complexity; it reads PNKNSNQQKKASKQNPQNS.

The protein belongs to the eIF-2B alpha/beta/delta subunits family. In terms of assembly, component of the translation initiation factor 2B (eIF2B) complex which is a heterodecamer of two sets of five different subunits: alpha, beta, gamma, delta and epsilon. Subunits alpha, beta and delta comprise a regulatory subcomplex and subunits epsilon and gamma comprise a catalytic subcomplex. Within the complex, the hexameric regulatory complex resides at the center, with the two heterodimeric catalytic subcomplexes bound on opposite sides.

It is found in the cytoplasm. Its subcellular location is the cytosol. Its function is as follows. Acts as a component of the translation initiation factor 2B (eIF2B) complex, which catalyzes the exchange of GDP for GTP on the eukaryotic initiation factor 2 (eIF2) complex gamma subunit. Its guanine nucleotide exchange factor activity is repressed when bound to eIF2 complex phosphorylated on the alpha subunit, thereby limiting the amount of methionyl-initiator methionine tRNA available to the ribosome and consequently global translation is repressed. The protein is Translation initiation factor eIF2B subunit delta (tif224) of Schizosaccharomyces pombe (strain 972 / ATCC 24843) (Fission yeast).